Reading from the N-terminus, the 261-residue chain is Cytochrome c oxidase subunit 3 (261 aa).

Residues 1 to 15 (MAHQAHAYHMVDPSP) lie on the Mitochondrial matrix side of the membrane. The chain crosses the membrane as a helical span at residues 16-34 (WPLTGAVAALLLTSGLAVW). At 35–40 (FHFKSL) the chain is on the mitochondrial intermembrane side. A helical membrane pass occupies residues 41 to 66 (TLLAMGLLLMILTMIQWWRDIIREGT). The Mitochondrial matrix portion of the chain corresponds to 67-72 (FQGHHT). A helical membrane pass occupies residues 73–105 (PPVQKGLRYGMILFITSEVFFFLGFFWAFYHSS). Residues 106 to 128 (LAPTPELGGIWPPTGITPLDPFE) are Mitochondrial intermembrane-facing. A helical membrane pass occupies residues 129–152 (VPLLNTAVLLASGVTVTWTHHSLM). Residues 153–155 (EGK) are Mitochondrial matrix-facing. Residues 156–183 (RTEATQALTLTILLGLYFTALQAMEYYE) form a helical membrane-spanning segment. The Mitochondrial intermembrane portion of the chain corresponds to 184 to 190 (APFTIAD). The chain crosses the membrane as a helical span at residues 191–223 (GVYGTTFFVATGFHGLHVIIGSTFLAGCLLRQI). The Mitochondrial matrix portion of the chain corresponds to 224–232 (LYHFTSSHH). A helical transmembrane segment spans residues 233–256 (FGFEAAAWYWHFVDVVWLFLYVSI). Topologically, residues 257–261 (YWWGS) are mitochondrial intermembrane.

It belongs to the cytochrome c oxidase subunit 3 family. Component of the cytochrome c oxidase (complex IV, CIV), a multisubunit enzyme composed of 14 subunits. The complex is composed of a catalytic core of 3 subunits MT-CO1, MT-CO2 and MT-CO3, encoded in the mitochondrial DNA, and 11 supernumerary subunits COX4I, COX5A, COX5B, COX6A, COX6B, COX6C, COX7A, COX7B, COX7C, COX8 and NDUFA4, which are encoded in the nuclear genome. The complex exists as a monomer or a dimer and forms supercomplexes (SCs) in the inner mitochondrial membrane with NADH-ubiquinone oxidoreductase (complex I, CI) and ubiquinol-cytochrome c oxidoreductase (cytochrome b-c1 complex, complex III, CIII), resulting in different assemblies (supercomplex SCI(1)III(2)IV(1) and megacomplex MCI(2)III(2)IV(2)).

Its subcellular location is the mitochondrion inner membrane. It catalyses the reaction 4 Fe(II)-[cytochrome c] + O2 + 8 H(+)(in) = 4 Fe(III)-[cytochrome c] + 2 H2O + 4 H(+)(out). In terms of biological role, component of the cytochrome c oxidase, the last enzyme in the mitochondrial electron transport chain which drives oxidative phosphorylation. The respiratory chain contains 3 multisubunit complexes succinate dehydrogenase (complex II, CII), ubiquinol-cytochrome c oxidoreductase (cytochrome b-c1 complex, complex III, CIII) and cytochrome c oxidase (complex IV, CIV), that cooperate to transfer electrons derived from NADH and succinate to molecular oxygen, creating an electrochemical gradient over the inner membrane that drives transmembrane transport and the ATP synthase. Cytochrome c oxidase is the component of the respiratory chain that catalyzes the reduction of oxygen to water. Electrons originating from reduced cytochrome c in the intermembrane space (IMS) are transferred via the dinuclear copper A center (CU(A)) of subunit 2 and heme A of subunit 1 to the active site in subunit 1, a binuclear center (BNC) formed by heme A3 and copper B (CU(B)). The BNC reduces molecular oxygen to 2 water molecules using 4 electrons from cytochrome c in the IMS and 4 protons from the mitochondrial matrix. The protein is Cytochrome c oxidase subunit 3 (mt-co3) of Polypterus ornatipinnis (Ornate bichir).